Reading from the N-terminus, the 92-residue chain is Small ribosomal subunit protein uS19 (92 aa).

It belongs to the universal ribosomal protein uS19 family.

In terms of biological role, protein S19 forms a complex with S13 that binds strongly to the 16S ribosomal RNA. The protein is Small ribosomal subunit protein uS19 of Corynebacterium efficiens (strain DSM 44549 / YS-314 / AJ 12310 / JCM 11189 / NBRC 100395).